We begin with the raw amino-acid sequence, 343 residues long: Glycerol-3-phosphate dehydrogenase [NAD(P)+] (343 aa).

Ser22, Tyr23, His43, and Lys117 together coordinate NADPH. Positions 117, 146, and 148 each coordinate sn-glycerol 3-phosphate. Ala150 serves as a coordination point for NADPH. The sn-glycerol 3-phosphate site is built by Lys202, Asp255, Ser265, Arg266, and Asn267. Catalysis depends on Lys202, which acts as the Proton acceptor. Arg266 is a binding site for NADPH. The NADPH site is built by Val290 and Glu292.

Belongs to the NAD-dependent glycerol-3-phosphate dehydrogenase family.

It localises to the cytoplasm. The catalysed reaction is sn-glycerol 3-phosphate + NAD(+) = dihydroxyacetone phosphate + NADH + H(+). It catalyses the reaction sn-glycerol 3-phosphate + NADP(+) = dihydroxyacetone phosphate + NADPH + H(+). The protein operates within membrane lipid metabolism; glycerophospholipid metabolism. Catalyzes the reduction of the glycolytic intermediate dihydroxyacetone phosphate (DHAP) to sn-glycerol 3-phosphate (G3P), the key precursor for phospholipid synthesis. The sequence is that of Glycerol-3-phosphate dehydrogenase [NAD(P)+] from Aliivibrio fischeri (strain ATCC 700601 / ES114) (Vibrio fischeri).